Here is a 372-residue protein sequence, read N- to C-terminus: Cyanuric acid amidohydrolase (372 aa).

Residues 1–105 (MPTTLRRAHV…IVFEAREVDE (105 aa)) are RU A. Substrate contacts are provided by residues Arg-56 and 84–85 (SG). The tract at residues 115-252 (SLALGRARTP…HEIMVAGMSR (138 aa)) is RU B. Residue Lys-165 is part of the active site. Substrate is bound by residues Arg-197 and 235–236 (SG). The active-site Nucleophile is Ser-235. The tract at residues 258-372 (LAIDHGVMRD…GPVAIIVERT (115 aa)) is RU C. Glu-305 lines the Mg(2+) pocket. Residues Arg-332 and 351–352 (SG) each bind substrate. Mg(2+)-binding residues include Ala-354, Gln-357, Gly-358, Pro-359, and Gly-362.

It belongs to the cyclic amide hydrolase (CyAH) family. In terms of assembly, homotetramer.

It catalyses the reaction cyanurate + H2O = 1-carboxybiuret + H(+). It participates in xenobiotic degradation; atrazine degradation; biuret from cyanurate: step 1/1. With respect to regulation, inhibited by barbituric acid. Responsible for the hydrolysis of cyanuric acid, an intermediate formed during catabolism of s-triazine based compounds in herbicides such as atrazine and polymers such as melamine. Catalyzes the hydrolytic opening of the s-triazine ring of cyanuric acid (2,4,6-trihydroxy-s-triazine) to yield carbon dioxide and carboxybiuret, which spontaneously decarboxylates to biuret. This is Cyanuric acid amidohydrolase from Bradyrhizobium sp. (strain ORS 375).